A 539-amino-acid chain; its full sequence is Efflux pump roqT (539 aa).

A disordered region spans residues 1-25 (MEKEVATDPLPQEIPSDAPDEGGSL). The next 12 helical transmembrane spans lie at 36 to 56 (VSLTIALCLGVFCMSLDVTII), 108 to 128 (LFLFEVGSLVCGVTPTSVGLI), 133 to 153 (IAGLGAGGLFSGSLLIIAQTV), 160 to 180 (VFTALLGSMYGIASVAGPPLG), 191 to 211 (WCFYINLPIGAVTAAFVLFFF), 233 to 253 (IGSFFFLPAIVCLLLALQWGG), 262 to 282 (RIIVLFVLTGVLLLAFVAVQI), 305 to 325 (WFAITLNGAYFVFIYYLPIWF), 338 to 360 (VMNLPSIIAVVVVSIISGMLVTI), 362 to 384 (GYYNPVMIMSSVTLSIGAGLLST), 395 to 415 (IGYQILMGLGVGLGMQQPFMV), and 502 to 522 (AFYVGVALASLSCIGTIALEW).

The protein belongs to the major facilitator superfamily. TCR/Tet family.

The protein resides in the membrane. Functionally, efflux pump; part of the gene cluster that mediates the biosynthesis of the mycotoxins roquefortine C and meleagrin. The sequence is that of Efflux pump roqT from Penicillium rubens (strain ATCC 28089 / DSM 1075 / NRRL 1951 / Wisconsin 54-1255) (Penicillium chrysogenum).